A 104-amino-acid chain; its full sequence is Small ribosomal subunit protein uS10 (104 aa).

Belongs to the universal ribosomal protein uS10 family. Part of the 30S ribosomal subunit.

In terms of biological role, involved in the binding of tRNA to the ribosomes. In Ralstonia nicotianae (strain ATCC BAA-1114 / GMI1000) (Ralstonia solanacearum), this protein is Small ribosomal subunit protein uS10.